The sequence spans 536 residues: Caspase recruitment domain-containing protein 9 (536 aa).

Ser2 is modified (phosphoserine). Zn(2+) contacts are provided by Asp3, Cys10, and His73. Positions 6–98 constitute a CARD domain; it reads NDDECWSTLE…QLYRKVTGKE (93 aa). The interval 99 to 116 is linker; that stretch reads PARVFSMIIDASGESGLT. The stretch at 117-272 forms a coiled coil; sequence QLLMTEVMKL…ELQVSVQEGK (156 aa). Lys125 is covalently cross-linked (Glycyl lysine isopeptide (Lys-Gly) (interchain with G-Cter in ubiquitin)). The residue at position 231 (Thr231) is a Phosphothreonine; by PKC/PRKCD. Ser277 is modified (phosphoserine). A coiled-coil region spans residues 303-415; it reads SLRKDLRQAE…LLAAEGRLKQ (113 aa). Phosphoserine occurs at positions 424, 425, 431, 451, 461, 483, and 498. A disordered region spans residues 425 to 451; that stretch reads SDLEDSSPRNSQELSLPQDLEEDAQLS. Residues 476–536 form a disordered region; the sequence is LTHGMGPSSS…GSDNTDTEGS (61 aa). The span at 487-502 shows a compositional bias: basic and acidic residues; it reads PPEKERRRLKESFENY. 2 positions are modified to phosphothreonine; by CK2: Thr531 and Thr533.

As to quaternary structure, monomer. Homodimer; homodimerization is mediated by the CARD domain which forms an extensive interaction with the adjacent linker and coiled-coil regions; leads to an autoinhibited state. Homomultimer; polymerizes following activation, forming a nucleating helical template that seeds BCL10-filament formation via a CARD-CARD interaction. Interacts (via CARD domain) with BCL10 (via CARD domain); interaction takes place following CARD9 activation and polymerization, leading to the formation of a filamentous CBM complex assembly. Component of a CBM complex (CARD9-BCL10, MALT1), composed of CARD9, BCL10 and MALT1. Interacts with RASGRF1. Interacts with NOD2 (via NACHT domain); interaction is direct. Interacts with RIPK2. Interacts with VHL; without leading to protein degradation. Post-translationally, phosphorylated at Thr-231 by PRKCD downstream of C-type lectin receptors activation: phosphorylation promotes interaction with BCL10, followed by activation of NF-kappa-B and MAP kinase p38 pathways. Phosphorylated at Thr-531 and Thr-531 by CK2 following interaction with VHL, leading to inhibit the ability to activate NF-kappa-B. In terms of processing, ubiquitinated at Lys-125 via 'Lys-27'-linked ubiquitin by TRIM62 downstream of C-type lectin receptors activation; leading to CARD9 activation, followed by activation of NF-kappa-B and MAP kinase p38 pathways. Deubiquitinated at Lys-125 by USP15, inhibiting CARD9. Specifically expressed in myeloid cells. Not expressed in non-lymphoid organs.

The protein resides in the cytoplasm. With respect to regulation, maintained in an autoinhibited state via homodimerization in which the CARD domain forms an extensive interaction with the adjacent linker and coiled-coil regions. Activation downstream of C-type lectin receptors, by phosphorylation by PRKCD and/or ubiquitination by TRIM62, triggers disruption of the CARD domain-coiled coil interface, CARD9 homooligomerization and BCL10 recruitment, followed by activation of NF-kappa-B and MAP kinase p38 pathways. Zinc-binding inhibits activation by stabilizing the CARD ground-state conformation and restricting its capacity to form BCL10-nucleating filaments. Adapter protein that plays a key role in innate immune response against fungi by forming signaling complexes downstream of C-type lectin receptors. CARD9-mediated signals are essential for antifungal immunity against a subset of fungi from the phylum Ascomycota. Transduces signals in myeloid cells downstream of C-type lectin receptors CLEC7A (dectin-1), CLEC6A (dectin-2) and CLEC4E (Mincle), which detect pathogen-associated molecular pattern metabolites (PAMPs), such as fungal carbohydrates, and trigger CARD9 activation. Upon activation, CARD9 homooligomerizes to form a nucleating helical template that recruits BCL10 via CARD-CARD interaction, thereby promoting polymerization of BCL10 and subsequent recruitment of MALT1: this leads to activation of NF-kappa-B and MAP kinase p38 (MAPK11, MAPK12, MAPK13 and/or MAPK14) pathways which stimulate expression of genes encoding pro-inflammatory cytokines and chemokines. CARD9 signaling in antigen-presenting cells links innate sensing of fungi to the activation of adaptive immunity and provides a cytokine milieu that induces the development and subsequent of interleukin 17-producing T helper (Th17) cells. Also involved in activation of myeloid cells via classical ITAM-associated receptors and TLR: required for TLR-mediated activation of MAPK, while it is not required for TLR-induced activation of NF-kappa-B. CARD9 can also be engaged independently of BCL10: forms a complex with RASGRF1 downstream of C-type lectin receptors, which recruits and activates HRAS, leading to ERK activation and the production of cytokines. Acts as an important regulator of the intestinal commensal fungi (mycobiota) component of the gut microbiota. Plays an essential role in antifungal immunity against dissemination of gut fungi: acts by promoting induction of antifungal IgG antibodies response in CX3CR1(+) macrophages to confer protection against disseminated C.albicans or C.auris infection. Also mediates immunity against other pathogens, such as certain bacteria, viruses and parasites; CARD9 signaling is however redundant with other innate immune responses. In response to L.monocytogenes infection, required for the production of inflammatory cytokines activated by intracellular peptidoglycan: acts by connecting NOD2 recognition of peptidoglycan to downstream activation of MAP kinases (MAPK) without activating NF-kappa-B. This is Caspase recruitment domain-containing protein 9 from Mus musculus (Mouse).